A 378-amino-acid polypeptide reads, in one-letter code: Metalloendoproteinase 2-MMP (378 aa).

The signal sequence occupies residues 1-20 (MRFCVFGFLSLFLIVSPASA). Residues 21–154 (WFFPNSTAVP…SRTHLHAVKR (134 aa)) constitute a propeptide, activation peptide. N-linked (GlcNAc...) asparagine glycans are attached at residues Asn25, Asn35, Asn46, Asn79, and Asn102. Positions 118-125 (PRCGNPDV) match the Cysteine switch motif. Cys120 contacts Zn(2+). 3 N-linked (GlcNAc...) asparagine glycosylation sites follow: Asn127, Asn143, and Asn203. Residue His280 coordinates Zn(2+). The active site involves Glu281. His284 and His290 together coordinate Zn(2+). Asn330 carries N-linked (GlcNAc...) asparagine glycosylation. Ser349 is lipidated: GPI-anchor amidated serine. The propeptide at 350–378 (AAWRIDGSSRSTIVSLLLSTVGLVLWFLP) is removed in mature form.

It belongs to the peptidase M10A family. Matrix metalloproteinases (MMPs) subfamily. It depends on Zn(2+) as a cofactor. Mostly expressed in roots, and, to a lower extent, in flowers, leaves and stems.

It localises to the cell membrane. Its activity is regulated as follows. Repressed by acetohydroxamic acid (AHA). Functionally, matrix metalloproteinases (MMPs) or matrixins may play a role in the degradation and remodeling of the extracellular matrix (ECM) during development or in response to stresses. Required for plant growth, morphogenesis, and development with particular relevance for flowering and senescence. Active on McaPLGLDpaAR-NH(2) (QF24) and myelin basic protein (MBP) and, to some extent, on beta-casein. In Arabidopsis thaliana (Mouse-ear cress), this protein is Metalloendoproteinase 2-MMP.